The sequence spans 113 residues: U11-theraphotoxin-Hhn1h (113 aa).

Residues Met1–Ala21 form the signal peptide. Residues Asp22–Arg74 constitute a propeptide that is removed on maturation. Positions Glu61–Asp83 are disordered. 2 disulfide bridges follow: Cys82–Cys95 and Cys89–Cys110.

It belongs to the neurotoxin 14 (magi-1) family. 01 (HNTX-16) subfamily. As to expression, expressed by the venom gland.

The protein localises to the secreted. Probable ion channel inhibitor. The polypeptide is U11-theraphotoxin-Hhn1h (Cyriopagopus hainanus (Chinese bird spider)).